The primary structure comprises 243 residues: Protein DMP8 (243 aa).

Residues 1-37 are disordered; the sequence is MEKTEESVGIRVYTTTTTQNPSPTSSRSPKPVPLSSL. Over residues 14 to 29 the composition is skewed to low complexity; the sequence is TTTTTQNPSPTSSRSP. 4 helical membrane-spanning segments follow: residues 70 to 90, 98 to 118, 174 to 194, and 212 to 232; these read MLVN…LPTI, GINT…CFFF, VNDF…AFSD, and VMES…LVFP.

The protein belongs to the plant DMP1 protein family. As to expression, restricted to flowers.

Its subcellular location is the endoplasmic reticulum membrane. The protein resides in the vacuole membrane. Involved in membrane remodeling. The sequence is that of Protein DMP8 from Arabidopsis thaliana (Mouse-ear cress).